The sequence spans 142 residues: Hemoglobin subunit zeta (142 aa).

An N-acetylserine modification is found at serine 2. The Globin domain occupies 2 to 142 (SLTRTERTII…VSGVLTEKYR (141 aa)). Threonine 29 is modified (phosphothreonine). Serine 53 is subject to Phosphoserine. Histidine 59 contacts heme b. Phosphoserine occurs at positions 73 and 82. Residue histidine 88 participates in heme b binding.

This sequence belongs to the globin family. Heterotetramer of two zeta chains and beta-type chains.

Its function is as follows. The zeta chain is an alpha-type chain of mammalian embryonic hemoglobin. The protein is Hemoglobin subunit zeta (HBZ1) of Capra hircus (Goat).